The chain runs to 258 residues: Ribosomal RNA small subunit methyltransferase A (258 aa).

S-adenosyl-L-methionine is bound by residues histidine 9, leucine 11, glycine 36, glutamate 57, aspartate 83, and asparagine 102.

The protein belongs to the class I-like SAM-binding methyltransferase superfamily. rRNA adenine N(6)-methyltransferase family. RsmA subfamily.

Its subcellular location is the cytoplasm. The catalysed reaction is adenosine(1518)/adenosine(1519) in 16S rRNA + 4 S-adenosyl-L-methionine = N(6)-dimethyladenosine(1518)/N(6)-dimethyladenosine(1519) in 16S rRNA + 4 S-adenosyl-L-homocysteine + 4 H(+). Functionally, specifically dimethylates two adjacent adenosines (A1518 and A1519) in the loop of a conserved hairpin near the 3'-end of 16S rRNA in the 30S particle. May play a critical role in biogenesis of 30S subunits. The polypeptide is Ribosomal RNA small subunit methyltransferase A (Caulobacter vibrioides (strain ATCC 19089 / CIP 103742 / CB 15) (Caulobacter crescentus)).